The chain runs to 235 residues: Thiamine-phosphate synthase (235 aa).

Residues 50–54 (QLRDK) and asparagine 91 contribute to the 4-amino-2-methyl-5-(diphosphooxymethyl)pyrimidine site. Mg(2+)-binding residues include aspartate 92 and aspartate 111. Residue serine 130 participates in 4-amino-2-methyl-5-(diphosphooxymethyl)pyrimidine binding. 160 to 162 (TPT) lines the 2-[(2R,5Z)-2-carboxy-4-methylthiazol-5(2H)-ylidene]ethyl phosphate pocket. A 4-amino-2-methyl-5-(diphosphooxymethyl)pyrimidine-binding site is contributed by lysine 163. Glycine 191 is a 2-[(2R,5Z)-2-carboxy-4-methylthiazol-5(2H)-ylidene]ethyl phosphate binding site.

Belongs to the thiamine-phosphate synthase family. Requires Mg(2+) as cofactor.

The enzyme catalyses 2-[(2R,5Z)-2-carboxy-4-methylthiazol-5(2H)-ylidene]ethyl phosphate + 4-amino-2-methyl-5-(diphosphooxymethyl)pyrimidine + 2 H(+) = thiamine phosphate + CO2 + diphosphate. It catalyses the reaction 2-(2-carboxy-4-methylthiazol-5-yl)ethyl phosphate + 4-amino-2-methyl-5-(diphosphooxymethyl)pyrimidine + 2 H(+) = thiamine phosphate + CO2 + diphosphate. The catalysed reaction is 4-methyl-5-(2-phosphooxyethyl)-thiazole + 4-amino-2-methyl-5-(diphosphooxymethyl)pyrimidine + H(+) = thiamine phosphate + diphosphate. Its pathway is cofactor biosynthesis; thiamine diphosphate biosynthesis; thiamine phosphate from 4-amino-2-methyl-5-diphosphomethylpyrimidine and 4-methyl-5-(2-phosphoethyl)-thiazole: step 1/1. Functionally, condenses 4-methyl-5-(beta-hydroxyethyl)thiazole monophosphate (THZ-P) and 2-methyl-4-amino-5-hydroxymethyl pyrimidine pyrophosphate (HMP-PP) to form thiamine monophosphate (TMP). The polypeptide is Thiamine-phosphate synthase (Mycobacterium leprae (strain TN)).